We begin with the raw amino-acid sequence, 855 residues long: DNA mismatch repair protein MutS (855 aa).

Residue 616–623 participates in ATP binding; that stretch reads GPNMGGKS.

Belongs to the DNA mismatch repair MutS family.

In terms of biological role, this protein is involved in the repair of mismatches in DNA. It is possible that it carries out the mismatch recognition step. This protein has a weak ATPase activity. This chain is DNA mismatch repair protein MutS, found in Salmonella schwarzengrund (strain CVM19633).